The following is a 129-amino-acid chain: Small ribosomal subunit protein uS11 (129 aa).

Belongs to the universal ribosomal protein uS11 family. As to quaternary structure, part of the 30S ribosomal subunit. Interacts with proteins S7 and S18. Binds to IF-3.

In terms of biological role, located on the platform of the 30S subunit, it bridges several disparate RNA helices of the 16S rRNA. Forms part of the Shine-Dalgarno cleft in the 70S ribosome. The sequence is that of Small ribosomal subunit protein uS11 from Phocaeicola vulgatus (strain ATCC 8482 / DSM 1447 / JCM 5826 / CCUG 4940 / NBRC 14291 / NCTC 11154) (Bacteroides vulgatus).